The chain runs to 494 residues: Metal cation symporter ZIP14 (494 aa).

Residues 1 to 34 (MTLRRASGCRQLTLTIGLALTLGLLQWPIGDVRG) form the signal peptide. Residues 35–152 (QDGASPAQVL…PTEAEVWGYG (118 aa)) lie on the Extracellular side of the membrane. A helical transmembrane segment spans residues 153-173 (LLCVTVISLCSLVGASVVPFM). Residues 174-181 (RKTFYKRL) lie on the Cytoplasmic side of the membrane. Residues 182-202 (LLYFIALAIGTLYSNALFQLI) form a helical membrane-spanning segment. Residues 203–219 (PEAFGFDPMEDYYVPKS) are Extracellular-facing. A helical transmembrane segment spans residues 220 to 240 (AVVFGGFYLFFFTEKILKMIL). At 241 to 397 (KPKDTGGHGH…LLNAGMSIQQ (157 aa)) the chain is on the cytoplasmic side. The HHHGHXHX-motif signature appears at 248–255 (HGHGHSHF). Positions 376 to 381 (EEFPHE) match the XEXPHE-motif motif. A helical membrane pass occupies residues 398 to 418 (ALFFNFLSACCCYLGMGFGIL). Residues 419–426 (AGNNFSPN) are Extracellular-facing. A helical membrane pass occupies residues 427–447 (WIFALAGGMFLYIALADMFPE). Over 448–462 (MNEVSREEEEAGGSG) the chain is Cytoplasmic. The helical transmembrane segment at 463–483 (FLLTFALQNAGLLTGFAIMLV) threads the bilayer. The Extracellular segment spans residues 484 to 494 (LTIYSGQIQLG).

The protein belongs to the ZIP transporter (TC 2.A.5) family. Homotrimer.

Its subcellular location is the cell membrane. The protein resides in the apical cell membrane. It is found in the basolateral cell membrane. It localises to the early endosome membrane. The protein localises to the late endosome membrane. Its subcellular location is the lysosome membrane. It catalyses the reaction Zn(2+)(out) + 2 hydrogencarbonate(out) = Zn(2+)(in) + 2 hydrogencarbonate(in). The enzyme catalyses Mn(2+)(out) + 2 hydrogencarbonate(out) = Mn(2+)(in) + 2 hydrogencarbonate(in). It carries out the reaction Fe(2+)(out) + 2 hydrogencarbonate(out) = Fe(2+)(in) + 2 hydrogencarbonate(in). The catalysed reaction is Cd(2+)(out) + 2 hydrogencarbonate(out) = Cd(2+)(in) + 2 hydrogencarbonate(in). Functionally, broad-scope metal ion transporter with a preference for zinc uptake. Also mediates cellular uptake of nontransferrin-bound iron. Its function is as follows. Electroneutral transporter of the plasma membrane mediating the cellular uptake of the divalent metal cations zinc, manganese and iron that are important for tissue homeostasis, metabolism, development and immunity. Functions as an energy-dependent symporter, transporting through the membranes an electroneutral complex composed of a divalent metal cation and two bicarbonate anions. Beside these endogenous cellular substrates, can also import cadmium a non-essential metal which is cytotoxic and carcinogenic. This Danio rerio (Zebrafish) protein is Metal cation symporter ZIP14.